The primary structure comprises 250 residues: Prolactin-7A2 (250 aa).

The signal sequence occupies residues 1-29 (MQLSFSRPRPWTLLLMVVSNLLLWENVSS). N-linked (GlcNAc...) asparagine glycans are attached at residues N26, N35, N102, and N134. Cystine bridges form between C100/C215 and C232/C241.

This sequence belongs to the somatotropin/prolactin family. Expression restricted to placental tissues. Trophoblast giant cells are found to be the major source.

The protein resides in the secreted. This chain is Prolactin-7A2 (Prl7a2), found in Rattus norvegicus (Rat).